A 573-amino-acid polypeptide reads, in one-letter code: PCNA-interacting partner (573 aa).

Residues 463 to 511 (VSEGAQPSVGKARLETSSENVHVDRSKDDKGPRKSTKRKLAKSKQPGVR) form a disordered region. A compositionally biased stretch (basic and acidic residues) spans 474-494 (ARLETSSENVHVDRSKDDKGP). A compositionally biased stretch (basic residues) spans 495-504 (RKSTKRKLAK).

It belongs to the PARI family. As to quaternary structure, interacts with RAD51 and PCNA. Interacts with PARP1. Interacts with TASOR. Present in testis (at protein level). Expressed in testis, gastrointestinal tract (jejunum, ileum, and colon) and immune system (thymus and spleen). Weakly expressed in lung, kidney, pituitary gland and muscle.

The protein resides in the cytoplasm. It localises to the nucleus. Required to suppress inappropriate homologous recombination, thereby playing a central role DNA repair and in the maintenance of genomic stability. Antagonizes homologous recombination by interfering with the formation of the RAD51-DNA homologous recombination structure. Positively regulate the poly(ADP-ribosyl)ation activity of PARP1; however such function may be indirect. Binds single-strand DNA and poly(A) homopolymers. The protein is PCNA-interacting partner (Parpbp) of Rattus norvegicus (Rat).